Here is a 416-residue protein sequence, read N- to C-terminus: Calreticulin (416 aa).

N-linked (GlcNAc...) asparagine glycosylation is present at Asn54. Cysteines 108 and 140 form a disulfide. Residues Tyr112, Lys114, Tyr131, and Asp138 each contribute to the an alpha-D-glucoside site. Repeat copies occupy residues 194–205 (KQSGSVYTDWDI), 213–224 (DPEAKKPEDWED), 230–241 (DPEDKKPEGYDD), 248–259 (DPEAKKPEDWDD), 263–273 (GEWTAPTIPNP), 277–287 (GEWKPKKIKNP), and 291–301 (GKWKAPMIDNP). The 4 X approximate repeats stretch occupies residues 194–259 (KQSGSVYTDW…EAKKPEDWDD (66 aa)). The interval 209-281 (KQIKDPEAKK…NPDYKGEWKP (73 aa)) is disordered. Residues 210–255 (QIKDPEAKKPEDWEDKEYIPDPEDKKPEGYDDIPKEITDPEAKKPE) are compositionally biased toward basic and acidic residues. The 3 X approximate repeats stretch occupies residues 263 to 301 (GEWTAPTIPNPDYKGEWKPKKIKNPNFKGKWKAPMIDNP). Glu321 is a binding site for an alpha-D-glucoside. The segment covering 349 to 378 (ETWGKNKDAEKAAFDEAEKKKEEEEAKDDP) has biased composition (basic and acidic residues). The disordered stretch occupies residues 349-416 (ETWGKNKDAE…EDDEDVHDEL (68 aa)). The segment covering 379–416 (TESDDEKPDEEGESDGEGDDESKDIDNEEDDEDVHDEL) has biased composition (acidic residues). Residues 413 to 416 (HDEL) carry the Prevents secretion from ER motif.

The protein belongs to the calreticulin family.

The protein localises to the endoplasmic reticulum lumen. Molecular calcium-binding chaperone promoting folding, oligomeric assembly and quality control in the ER via the calreticulin/calnexin cycle. This lectin may interact transiently with almost all of the monoglucosylated glycoproteins that are synthesized in the ER. The polypeptide is Calreticulin (Berberis stolonifera (Barberry)).